The sequence spans 869 residues: Valine--tRNA ligase (869 aa).

The short motif at 51–61 (PNVTGNLHLGH) is the 'HIGH' region element. The short motif at 523–527 (KMSKS) is the 'KMSKS' region element. Lys-526 contributes to the ATP binding site. Positions 797 to 869 (EDLLGSNNEA…ELEKLLSSHK (73 aa)) form a coiled coil.

This sequence belongs to the class-I aminoacyl-tRNA synthetase family. ValS type 1 subfamily. As to quaternary structure, monomer.

It is found in the cytoplasm. It carries out the reaction tRNA(Val) + L-valine + ATP = L-valyl-tRNA(Val) + AMP + diphosphate. Its function is as follows. Catalyzes the attachment of valine to tRNA(Val). As ValRS can inadvertently accommodate and process structurally similar amino acids such as threonine, to avoid such errors, it has a 'posttransfer' editing activity that hydrolyzes mischarged Thr-tRNA(Val) in a tRNA-dependent manner. This is Valine--tRNA ligase from Malacoplasma penetrans (strain HF-2) (Mycoplasma penetrans).